Here is a 959-residue protein sequence, read N- to C-terminus: MESKKNSYYKNVMDKIYAKEKDVLSINKDFQENNLTRISLILNYKDFYLKFDESLHGYSFGYVTNLFGLKLYSPFTETVRFDDTEKYMKTILGVPSNEALPQLCSDQHQNFEEKDPQIEILPSPQQQQQQQQQQQQQQQQQQQQQQQQQQQQQQQQQQQQLTPPPSPPLLPIPQPPAQNEEQQLTQPPSIPPPQQKQIKIQKSDRGTQVKSITNPVNSLSKYINNSSLDYSIKKNYTLEEIYENNKNYMDKTNNFLHFLFTFIDKTTIKDLEHFEKEISRVHNIEKLINEQNVKGETPLHSLILYNSESCLKKLVIAKINCMGIFDYSKCDNLNKNLLTHAIEKGDFEIIKLVLIGGCPLKMSPRSKLFKQNFKLYRQQIYRVFEIKEFLTELGFNQFIPMFLEYEFKNINIYYQIKSFIMVLTLNADEILRWKSLLEPNKNLDLDSFCIEYQIKDQNGSESQLMADHFKKVCQLNSLFGYIDFHTQIGSAGNASVFEGTYKGMPIACKEMPVSGTYEQRVDSIKEIAAVGQIEDLGGCTVVKTVGVLKYNEKLFLVMVKEKCNLLSFLSNKSEILKMQRGGIWTSIFKISKEILKGLISLREVGMYHRDFKTANFLVSNTGKILISDFGTSRDENEKRFNTFAKTIGTLWYRCPRLGDCSGDEKTLNHYNEKSEIYSLGIILWELICIAMTGTYVSPKIALFQNEVDFSIWIHKDYRFSFPIGTPQSLVKLITSMCLPCRDRRPTVHQILDEVGIIETEFLSNRGIKGEQTYSGLECWREFNFSKQNVFGISISNLHDTEYKAVNKYNYTSYNNKNSLLMKRYLDNSNFVVELINPNGIFKFKSFFEKEKLLYLKLKSTYKGEYYFDMGKFLTTIIQIHQITEIYYKMLQKYRELGLLRNNNNNINNNNNNNNNCNNSKKFKTTSESTSALGSDASSSSSPSSSSPSPKYSASIYHHQ.

Residues 154–213 (QQQQQQQLTPPPSPPLLPIPQPPAQNEEQQLTQPPSIPPPQQKQIKIQKSDRGTQVKSIT) form a disordered region. A compositionally biased stretch (pro residues) spans 162-176 (TPPPSPPLLPIPQPP). 2 ANK repeats span residues 294–324 (KGET…CMGI) and 333–362 (LNKN…PLKM). Residues 482–762 (IDFHTQIGSA…EVGIIETEFL (281 aa)) enclose the Protein kinase domain. ATP contacts are provided by residues 488–496 (IGSAGNASV) and K509. Catalysis depends on D610, which acts as the Proton acceptor. Positions 904–959 (NNINNNNNNNNNCNNSKKFKTTSESTSALGSDASSSSSPSSSSPSPKYSASIYHHQ) are disordered.

Belongs to the protein kinase superfamily. Ser/Thr protein kinase family.

The catalysed reaction is L-seryl-[protein] + ATP = O-phospho-L-seryl-[protein] + ADP + H(+). It catalyses the reaction L-threonyl-[protein] + ATP = O-phospho-L-threonyl-[protein] + ADP + H(+). In Dictyostelium discoideum (Social amoeba), this protein is Probable serine/threonine-protein kinase DDB_G0291664.